Here is a 398-residue protein sequence, read N- to C-terminus: tRNA-specific 2-thiouridylase MnmA (398 aa).

Residues 18-25 (AMSGGVDS) and leucine 44 each bind ATP. Cysteine 112 acts as the Nucleophile in catalysis. A disulfide bridge links cysteine 112 with cysteine 213. Glycine 136 lines the ATP pocket. An interaction with tRNA region spans residues 163–165 (RDQ). Cysteine 213 (cysteine persulfide intermediate) is an active-site residue.

The protein belongs to the MnmA/TRMU family.

It is found in the cytoplasm. It carries out the reaction S-sulfanyl-L-cysteinyl-[protein] + uridine(34) in tRNA + AH2 + ATP = 2-thiouridine(34) in tRNA + L-cysteinyl-[protein] + A + AMP + diphosphate + H(+). Catalyzes the 2-thiolation of uridine at the wobble position (U34) of tRNA, leading to the formation of s(2)U34. This chain is tRNA-specific 2-thiouridylase MnmA, found in Rhizobium meliloti (strain 1021) (Ensifer meliloti).